The following is a 178-amino-acid chain: Gamma-crystallin S (178 aa).

Serine 2 bears the N-acetylserine mark. Residues 2–5 (SKAG) form an N-terminal arm region. Beta/gamma crystallin 'Greek key' domains follow at residues 6–44 (TKITFFEDKNFQGRHYDSDCDCADFHMYLSRCNSIRVEG) and 45–87 (GTWA…RAVH). The segment at 88–93 (LSSGGQ) is connecting peptide. 2 Beta/gamma crystallin 'Greek key' domains span residues 94–134 (YKLQ…KVLE) and 135–177 (GAWI…RRIV).

It belongs to the beta/gamma-crystallin family. Monomer.

Its function is as follows. Crystallins are the dominant structural components of the vertebrate eye lens. The chain is Gamma-crystallin S (CRYGS) from Bos taurus (Bovine).